Consider the following 198-residue polypeptide: Small ribosomal subunit protein uS4 (198 aa).

Positions 91–151 (SRLDNIVYRL…EKSKNLKIVE (61 aa)) constitute an S4 RNA-binding domain.

This sequence belongs to the universal ribosomal protein uS4 family. In terms of assembly, part of the 30S ribosomal subunit. Contacts protein S5. The interaction surface between S4 and S5 is involved in control of translational fidelity.

Its function is as follows. One of the primary rRNA binding proteins, it binds directly to 16S rRNA where it nucleates assembly of the body of the 30S subunit. In terms of biological role, with S5 and S12 plays an important role in translational accuracy. In Phytoplasma australiense, this protein is Small ribosomal subunit protein uS4.